Reading from the N-terminus, the 572-residue chain is Protein IQ-DOMAIN 30 (572 aa).

Residues 75–96 (SDDEIQVSEVQPTDSQDVASVP) form a disordered region. Over residues 82–92 (SEVQPTDSQDV) the composition is skewed to polar residues. IQ domains follow at residues 108-136 (QEIAAVTVQAAYRGYLARRAFKILKGIIR) and 137-154 (LQALIRGHMVRRQAVSTL). The interval 159 to 178 (GIVRLQALARGREIRHSDIG) is calmodulin-binding. Disordered regions lie at residues 282 to 332 (RPKK…MDNP) and 399 to 572 (IQTH…EWKR). Composition is skewed to polar residues over residues 291 to 305 (PSSNLDNSSVAQTSS) and 400 to 419 (QTHTPLGTNESLDSTLVNQI). Over residues 428 to 455 (AEEKEDVKEERTPKQNHKENSAGKENQK) the composition is skewed to basic and acidic residues. 3 stretches are compositionally biased toward polar residues: residues 459 to 493 (KASSVTATQTAEFQESGNGNQTSSPGIPSYMQATK), 502 to 514 (QGSSSPRQLGTTE), and 522 to 560 (LPSSGNSAKITSHSPKTRVSNSSGKSGNKTEKTLLSSRE).

This sequence belongs to the IQD family. Binds to multiple calmodulin (CaM) in the presence of Ca(2+) and CaM-like proteins.

Its subcellular location is the nucleus envelope. The protein localises to the cytoplasm. The protein resides in the cytoskeleton. May be involved in cooperative interactions with calmodulins or calmodulin-like proteins. Recruits calmodulin proteins to microtubules, thus being a potential scaffold in cellular signaling and trafficking. May associate with nucleic acids and regulate gene expression at the transcriptional or post-transcriptional level. The protein is Protein IQ-DOMAIN 30 of Arabidopsis thaliana (Mouse-ear cress).